The chain runs to 269 residues: Cleavage and polyadenylation specificity factor subunit 4 (269 aa).

C3H1-type zinc fingers lie at residues 35-61 (KSGAAVCEFFLKAACGKGGMCPFRHIS), 62-89 (GEKTVVCKHWLRGLCKKGDQCEFLHEYD), 90-117 (MTKMPECYFYSKFGECSNKECPFLHIDP), 118-142 (ESKIKDCPWYDRGFCKHGPLCRHRH), and 143-169 (TRRVICVNYLVGFCPEGPSCKFMHPRF). The interval 173–199 (MGTTEQPPLPQQTQPPAKQSNNPPLQR) is disordered. Ser-200, Ser-202, and Ser-212 each carry phosphoserine. Residues 243–260 (VTCYKCGEKGHYANRCTK) form a CCHC-type zinc finger. Ser-267 bears the Phosphoserine mark.

Belongs to the CPSF4/YTH1 family. As to quaternary structure, component of the cleavage and polyadenylation specificity factor (CPSF) complex, composed of CPSF1, CPSF2, CPSF3, CPSF4 and FIP1L1. Interacts with FIP1L1. In terms of assembly, (Microbial infection) Interacts with influenza A virus NS1 blocks processing of pre-mRNAs, thereby preventing nuclear export of host cell mRNAs.

Its subcellular location is the nucleus. Its function is as follows. Component of the cleavage and polyadenylation specificity factor (CPSF) complex that play a key role in pre-mRNA 3'-end formation, recognizing the AAUAAA signal sequence and interacting with poly(A) polymerase and other factors to bring about cleavage and poly(A) addition. CPSF4 binds RNA polymers with a preference for poly(U). The sequence is that of Cleavage and polyadenylation specificity factor subunit 4 (CPSF4) from Homo sapiens (Human).